Here is a 1132-residue protein sequence, read N- to C-terminus: Phospholipid-transporting ATPase IG (1132 aa).

Over methionine 1–glutamine 66 the chain is Cytoplasmic. The chain crosses the membrane as a helical span at residues phenylalanine 67–valine 85. A topological domain (extracellular) is located at residue aspartate 86. A helical membrane pass occupies residues threonine 87 to isoleucine 107. The Cytoplasmic segment spans residues lysine 108–serine 290. A helical transmembrane segment spans residues isoleucine 291–threonine 311. Residues leucine 312–aspartate 346 are Extracellular-facing. The chain crosses the membrane as a helical span at residues phenylalanine 347–glutamate 367. The Cytoplasmic segment spans residues methionine 368–tyrosine 879. Aspartate 412 (4-aspartylphosphate intermediate) is an active-site residue. ATP-binding residues include aspartate 412, lysine 413, and threonine 414. Aspartate 412 lines the Mg(2+) pocket. Residue threonine 414 coordinates Mg(2+). Serine 445 bears the Phosphoserine mark. ATP contacts are provided by glutamate 501, phenylalanine 543, lysine 566, arginine 597, threonine 677, glycine 678, aspartate 679, arginine 792, and lysine 798. Aspartate 819 contacts Mg(2+). Positions 822 and 823 each coordinate ATP. Position 823 (aspartate 823) interacts with Mg(2+). Residues phenylalanine 880–phenylalanine 900 form a helical membrane-spanning segment. At serine 901–alanine 908 the chain is on the extracellular side. A helical membrane pass occupies residues alanine 909–leucine 929. Over glutamate 930–glutamine 955 the chain is Cytoplasmic. Residues leucine 956–glycine 976 form a helical membrane-spanning segment. Topologically, residues threonine 977–asparagine 995 are extracellular. A helical transmembrane segment spans residues tryptophan 996–leucine 1016. The Cytoplasmic portion of the chain corresponds to aspartate 1017 to histidine 1026. The helical transmembrane segment at phenylalanine 1027–isoleucine 1047 threads the bilayer. Residues tryptophan 1048 to threonine 1069 lie on the Extracellular side of the membrane. A helical transmembrane segment spans residues tryptophan 1070–leucine 1090. Topologically, residues lysine 1091–leucine 1132 are cytoplasmic. Residues serine 1108, serine 1116, and serine 1126 each carry the phosphoserine modification. Residues serine 1116 to leucine 1121 carry the Di-leucine motif motif.

It belongs to the cation transport ATPase (P-type) (TC 3.A.3) family. Type IV subfamily. In terms of assembly, component of a P4-ATPase flippase complex which consists of a catalytic alpha subunit ATP11C and an accessory beta subunit TMEM30A. It depends on Mg(2+) as a cofactor. In terms of processing, proteolytically cleaved by CASP3, CASP6 and CASP7. Post-translationally, phosphorylated at Ser-1116 likely by PRKCA; this creates a functional di-leucine motif that is sufficient for endocytosis. Widely expressed.

The protein localises to the cell membrane. Its subcellular location is the endoplasmic reticulum membrane. It is found in the early endosome membrane. It localises to the recycling endosome membrane. The catalysed reaction is ATP + H2O + phospholipidSide 1 = ADP + phosphate + phospholipidSide 2.. The enzyme catalyses a 1,2-diacyl-sn-glycero-3-phospho-L-serine(out) + ATP + H2O = a 1,2-diacyl-sn-glycero-3-phospho-L-serine(in) + ADP + phosphate + H(+). It catalyses the reaction a 1,2-diacyl-sn-glycero-3-phosphoethanolamine(out) + ATP + H2O = a 1,2-diacyl-sn-glycero-3-phosphoethanolamine(in) + ADP + phosphate + H(+). With respect to regulation, the flippase activity is inactivated by caspase-mediated cleavage in apoptotic cells, allowing for PS exposure on the cell surface and engulfment of apoptotic cells by macrophages. The ATPase activity is up-regulated by aminophospholipids PS and PE and down-regulated by Increasing intracellular Ca2+ levels. Catalytic component of a P4-ATPase flippase complex which catalyzes the hydrolysis of ATP coupled to the transport of aminophospholipids, phosphatidylserines (PS) and phosphatidylethanolamines (PE), from the outer to the inner leaflet of the plasma membrane. Major PS-flippase in immune cell subsets. In erythrocyte plasma membrane, it is required to maintain PS in the inner leaflet preventing its exposure on the surface. This asymmetric distribution is critical for the survival of erythrocytes in circulation since externalized PS is a phagocytic signal for erythrocyte clearance by splenic macrophages. Required for B cell differentiation past the pro-B cell stage. Seems to mediate PS flipping in pro-B cells. May be involved in the transport of cholestatic bile acids. The protein is Phospholipid-transporting ATPase IG of Homo sapiens (Human).